The sequence spans 516 residues: 2-isopropylmalate synthase (516 aa).

The Pyruvate carboxyltransferase domain maps to 5 to 268 (LIIFDTTLRD…DLGIDTTQIV (264 aa)). Mn(2+)-binding residues include D14, H202, H204, and N239. Positions 395–516 (KFVSLSQHSE…DKLNPQRADI (122 aa)) are regulatory domain.

Belongs to the alpha-IPM synthase/homocitrate synthase family. LeuA type 1 subfamily. In terms of assembly, homodimer. The cofactor is Mn(2+).

It is found in the cytoplasm. It carries out the reaction 3-methyl-2-oxobutanoate + acetyl-CoA + H2O = (2S)-2-isopropylmalate + CoA + H(+). The protein operates within amino-acid biosynthesis; L-leucine biosynthesis; L-leucine from 3-methyl-2-oxobutanoate: step 1/4. Catalyzes the condensation of the acetyl group of acetyl-CoA with 3-methyl-2-oxobutanoate (2-ketoisovalerate) to form 3-carboxy-3-hydroxy-4-methylpentanoate (2-isopropylmalate). This Paraburkholderia phymatum (strain DSM 17167 / CIP 108236 / LMG 21445 / STM815) (Burkholderia phymatum) protein is 2-isopropylmalate synthase.